Reading from the N-terminus, the 544-residue chain is NADP-dependent malic enzyme (544 aa).

The tract at residues methionine 1–asparagine 22 is disordered. The span at proline 12–asparagine 21 shows a compositional bias: polar residues. The Proton donor role is filled by tyrosine 92. Arginine 145 is an NAD(+) binding site. Lysine 163 functions as the Proton acceptor in the catalytic mechanism. A divalent metal cation contacts are provided by glutamate 234, aspartate 235, and aspartate 258. Residue aspartate 258 coordinates NAD(+). Position 287–303 (valine 287–methionine 303) interacts with NADP(+). Asparagine 400 is a binding site for NAD(+).

The protein belongs to the malic enzymes family. Homotetramer. Mg(2+) is required as a cofactor. Requires Mn(2+) as cofactor. As to expression, expressed in the fruiting body.

It is found in the cytoplasm. It carries out the reaction (S)-malate + NADP(+) = pyruvate + CO2 + NADPH. The catalysed reaction is oxaloacetate + H(+) = pyruvate + CO2. In Dictyostelium discoideum (Social amoeba), this protein is NADP-dependent malic enzyme (malA).